A 1254-amino-acid polypeptide reads, in one-letter code: NPC intracellular cholesterol transporter 1 homolog 1b (1254 aa).

The N-terminal stretch at 1-16 (MKVIFATIWLIAGAWS) is a signal peptide. The Extracellular portion of the chain corresponds to 17-272 (QSAEQLGCIW…WKIAGLYGVT (256 aa)). 8 disulfides stabilise this stretch: C24–C81, C62–C116, C82–C120, C104–C241, C107–C161, C178–C186, C231–C246, and C243–C250. Residues N123 and N132 are each glycosylated (N-linked (GlcNAc...) asparagine). Residues 273–293 (FILALIIACALSFFIFWGAFG) form a helical membrane-spanning segment. Residues 294–325 (KTSAPSVCMPTLFGEFFYHGFRIWGTFCAKHP) are Cytoplasmic-facing. A helical membrane pass occupies residues 326-346 (VIVLALCSWAIAGLSFGIRYM). Residues 347-593 (TITTDPVELW…AIVELSEGEV (247 aa)) lie on the Extracellular side of the membrane. N-linked (GlcNAc...) asparagine glycosylation occurs at N389. A disulfide bridge connects residues C438 and C454. An N-linked (GlcNAc...) asparagine glycan is attached at N479. C491 and C500 are oxidised to a cystine. Residues 592–757 (EVSTVVISYV…ITAFVALMAI (166 aa)) enclose the SSD domain. The helical transmembrane segment at 594 to 614 (STVVISYVVMFVYVAIALGHI) threads the bilayer. Topologically, residues 615 to 625 (RSCRGFLRESR) are cytoplasmic. Residues 626–646 (IMLAIGGIVIVLASVVCSLGF) traverse the membrane as a helical segment. At 647 to 657 (WGYLDVTTTML) the chain is on the extracellular side. The helical transmembrane segment at 658 to 678 (AIEVIPFLVLAVGVDNIFIMV) threads the bilayer. Residues 679-736 (HTYQRLDHSKFKTTHEAIGEAIGQVGPSILQTAGSEMACFAIGCISDMPAVKTFAMYA) are Cytoplasmic-facing. The chain crosses the membrane as a helical span at residues 737–757 (AIAILLDFLLQITAFVALMAI). Topologically, residues 758-815 (DEKRYLDGRLDMLCCVKSGGKKINDEDGDGVDRPKEVGLLETLFKNFYSPFLLSKPVK) are extracellular. Residues 816–836 (VSVLLIFTVITCLSLMVTPSI) form a helical membrane-spanning segment. Residues 837 to 857 (EKGLDQEMSMPKNSHVVKYFR) lie on the Cytoplasmic side of the membrane. A helical membrane pass occupies residues 858 to 878 (YMVDLLAMGAPVYWVLKPGLN). At 879–1079 (YSEPLQQNLI…EQYLTIWGDA (201 aa)) the chain is on the extracellular side. A disulfide bridge connects residues C889 and C894. N-linked (GlcNAc...) asparagine glycosylation is found at N896 and N939. 3 disulfide bridges follow: C935–C990, C936–C958, and C946–C955. A helical transmembrane segment spans residues 1080–1100 (MFSLGMSLVAIFLVTLLITGL). The Cytoplasmic portion of the chain corresponds to 1101 to 1105 (DITST). The chain crosses the membrane as a helical span at residues 1106-1126 (FIVLFMVICILINMLGMMWAW). The Extracellular portion of the chain corresponds to 1127–1132 (SINLNA). A helical transmembrane segment spans residues 1133 to 1153 (ISLVNLVVCVGIGVEFVAHIV). Residues 1154–1174 (RSFKRAEGTAQERARHSLNVT) are Cytoplasmic-facing. Residues 1175–1195 (GSSVLSGITLTKFAGIVVLGF) traverse the membrane as a helical segment. Topologically, residues 1196–1207 (SNSQIFQVFYFR) are extracellular. The helical transmembrane segment at 1208–1228 (MYLGIVLIGAAHGLILLPVLL) threads the bilayer. At 1229-1254 (SLLGPPQKLARSSGAEPTASITITTN) the chain is on the cytoplasmic side.

This sequence belongs to the patched family. In terms of tissue distribution, expressed in the midgut.

Its subcellular location is the cell membrane. It carries out the reaction cholesterol(in) = cholesterol(out). In terms of biological role, important for cholesterol absorption at the midgut epithelium. Acts only in the early steps of sterol absorption, prior to Npc1a-dependent intracellular sterol trafficking. This Drosophila melanogaster (Fruit fly) protein is NPC intracellular cholesterol transporter 1 homolog 1b.